The following is a 180-amino-acid chain: Hypoxanthine-guanine phosphoribosyltransferase (180 aa).

GMP-binding positions include lysine 40, 99 to 107, lysine 131, and aspartate 159; that span reads EDIVDSGLT. The active-site Proton acceptor is the aspartate 103. A Mg(2+)-binding site is contributed by aspartate 159.

The protein belongs to the purine/pyrimidine phosphoribosyltransferase family. The cofactor is Mg(2+).

It localises to the cytoplasm. The enzyme catalyses IMP + diphosphate = hypoxanthine + 5-phospho-alpha-D-ribose 1-diphosphate. The catalysed reaction is GMP + diphosphate = guanine + 5-phospho-alpha-D-ribose 1-diphosphate. It participates in purine metabolism; IMP biosynthesis via salvage pathway; IMP from hypoxanthine: step 1/1. Its function is as follows. Converts guanine to guanosine monophosphate, and hypoxanthine to inosine monophosphate. Transfers the 5-phosphoribosyl group from 5-phosphoribosylpyrophosphate onto the purine. Plays a central role in the generation of purine nucleotides through the purine salvage pathway. This Dictyostelium discoideum (Social amoeba) protein is Hypoxanthine-guanine phosphoribosyltransferase (hprT).